We begin with the raw amino-acid sequence, 227 residues long: Ribose-5-phosphate isomerase A (227 aa).

Residues 28–31, 85–88, and 98–101 contribute to the substrate site; these read TGST, DGAD, and KGGG. The active-site Proton acceptor is Glu-107. Lys-125 serves as a coordination point for substrate.

The protein belongs to the ribose 5-phosphate isomerase family. Homodimer.

The enzyme catalyses aldehydo-D-ribose 5-phosphate = D-ribulose 5-phosphate. It functions in the pathway carbohydrate degradation; pentose phosphate pathway; D-ribose 5-phosphate from D-ribulose 5-phosphate (non-oxidative stage): step 1/1. Its function is as follows. Catalyzes the reversible conversion of ribose-5-phosphate to ribulose 5-phosphate. The sequence is that of Ribose-5-phosphate isomerase A from Limosilactobacillus reuteri (strain DSM 20016) (Lactobacillus reuteri).